Here is an 886-residue protein sequence, read N- to C-terminus: Conserved oligomeric Golgi complex subunit 1 (886 aa).

Residues 834 to 846 are compositionally biased toward basic and acidic residues; that stretch reads SAERKSPIQEPVE. Positions 834–886 are disordered; that stretch reads SAERKSPIQEPVEKTATTTPTRKSGGNGARKGDSSKSKSSAASFFGMSQEWFR. A Phosphoserine modification is found at Ser-839. Over residues 848 to 857 the composition is skewed to polar residues; it reads TATTTPTRKS.

The protein belongs to the COG1 family. Component of the conserved oligomeric Golgi complex which is composed of eight different subunits and is required for normal Golgi morphology and localization.

It is found in the golgi apparatus membrane. Its function is as follows. Required for normal Golgi function. The chain is Conserved oligomeric Golgi complex subunit 1 from Drosophila melanogaster (Fruit fly).